The sequence spans 309 residues: Serine/threonine-protein phosphatase 4 catalytic subunit (309 aa).

Residues D52, H54, D80, and N112 each contribute to the Mn(2+) site. The active-site Proton donor is H113. Positions 162 and 236 each coordinate Mn(2+). L309 is modified (leucine methyl ester).

Belongs to the PPP phosphatase family. PP-4 (PP-X) subfamily. As to quaternary structure, catalytic subunit of the histone H2A phosphatase complex (HTP-C) containing PPH3, PSY2 and PSY4. Mn(2+) is required as a cofactor.

The protein localises to the cytoplasm. The protein resides in the nucleus. The enzyme catalyses O-phospho-L-seryl-[protein] + H2O = L-seryl-[protein] + phosphate. The catalysed reaction is O-phospho-L-threonyl-[protein] + H2O = L-threonyl-[protein] + phosphate. Forms the histone H2A phosphatase complex in association with the regulatory subunits PSY2 and PSY4, which dephosphorylates H2AS128ph (gamma-H2A) that has been displaced from sites of DNA lesions in the double-stranded DNA break repair process. Dephosphorylation is necessary for efficient recovery from the DNA damage checkpoint. This Candida glabrata (strain ATCC 2001 / BCRC 20586 / JCM 3761 / NBRC 0622 / NRRL Y-65 / CBS 138) (Yeast) protein is Serine/threonine-protein phosphatase 4 catalytic subunit (PPH3).